Reading from the N-terminus, the 598-residue chain is Elongation factor 4 (598 aa).

Residues 5-187 (SHIRNFSIIA…RLVATIPAPT (183 aa)) form the tr-type G domain. GTP is bound by residues 17–22 (DHGKST) and 134–137 (NKMD).

It belongs to the TRAFAC class translation factor GTPase superfamily. Classic translation factor GTPase family. LepA subfamily.

The protein resides in the cell inner membrane. The enzyme catalyses GTP + H2O = GDP + phosphate + H(+). In terms of biological role, required for accurate and efficient protein synthesis under certain stress conditions. May act as a fidelity factor of the translation reaction, by catalyzing a one-codon backward translocation of tRNAs on improperly translocated ribosomes. Back-translocation proceeds from a post-translocation (POST) complex to a pre-translocation (PRE) complex, thus giving elongation factor G a second chance to translocate the tRNAs correctly. Binds to ribosomes in a GTP-dependent manner. The polypeptide is Elongation factor 4 (Pseudomonas syringae pv. syringae (strain B728a)).